Here is an 84-residue protein sequence, read N- to C-terminus: Large ribosomal subunit protein uL23 (84 aa).

It belongs to the universal ribosomal protein uL23 family. As to quaternary structure, part of the 50S ribosomal subunit. Contacts protein L29.

Binds to 23S rRNA. One of the proteins that surrounds the polypeptide exit tunnel on the outside of the ribosome. This is Large ribosomal subunit protein uL23 from Halobacterium salinarum (strain ATCC 700922 / JCM 11081 / NRC-1) (Halobacterium halobium).